The chain runs to 977 residues: Serine/threonine-protein kinase/endoribonuclease IRE1 (977 aa).

The signal sequence occupies residues 1–20; that stretch reads MPARWLLLLLALLLPPPGPG. The Lumenal segment spans residues 21 to 445; that stretch reads SFGRTSTVTL…EAPVDSMLKD (425 aa). N-linked (GlcNAc...) asparagine glycosylation occurs at Asn178. A helical membrane pass occupies residues 446–466; sequence MATIILSTFLLVGWVAFIITY. Over 467–977 the chain is Cytoplasmic; it reads PLSVHQQRQL…PQPPVIPYAL (511 aa). Positions 498 to 559 are disordered; the sequence is FHPHGDLTQD…PSLEQDDEDE (62 aa). The span at 513 to 551 shows a compositional bias: low complexity; it reads SSGPFSESSGTSSPSPSPRASNHSLHPSSSASRAGTSPS. One can recognise a Protein kinase domain in the interval 571 to 832; that stretch reads FCPKDVLGHG…AKHVLKHPFF (262 aa). Residues 577 to 585, Lys599, and 643 to 645 each bind ATP; these read LGHGAEGTI and ELC. Residue Asp688 is the Proton acceptor; for protein kinase activity of the active site. ATP is bound by residues 690 to 693 and Asp711; that span reads KPHN. Residues Ser724 and Ser729 each carry the phosphoserine modification. One can recognise a KEN domain in the interval 835–963; the sequence is LEKQLQFFQD…ERLFQTYYWH (129 aa). An interacts with hydroxy-aryl-aldehyde inhibitors region spans residues 906-907; that stretch reads NK.

This sequence belongs to the protein kinase superfamily. Ser/Thr protein kinase family. As to quaternary structure, monomer. Homodimer; disulfide-linked; homodimerization takes place in response to endoplasmic reticulum stress and promotes activation of the kinase and endoribonuclease activities. Dimer formation is driven by hydrophobic interactions within the N-terminal luminal domains and stabilized by disulfide bridges. Interacts (via the luminal region) with DNAJB9/ERdj4; interaction takes place in unstressed cells and promotes recruitment of HSPA5/BiP. Interacts (via the luminal region) with HSPA5/BiP; HSPA5/BiP is a negative regulator of the unfolded protein response (UPR) that prevents homodimerization of ERN1/IRE1 and subsequent activation of the protein. Interaction with HSPA5 also competitively inhibits ERN1 interaction with MANF. Interacts with PDIA6, a negative regulator of the UPR; the interaction is direct and disrupts homodimerization. Interacts with DAB2IP (via PH domain); the interaction occurs in a endoplasmic reticulum stress-induced dependent manner and is required for subsequent recruitment of TRAF2 to ERN1/IRE1. Interacts with TAOK3 and TRAF2. Interacts with RNF13. Interacts with LACC1. Interacts (when unphosphorylated) with DDRGK1; interaction is dependent on UFM1 and takes place in response to endoplasmic reticulum stress, regulating ERN1/IRE1-alpha stability. Interacts (via N-terminus) with P4HB/PDIA1; the interaction is enhanced by phosphorylation of P4HB by FAM20C in response to endoplasmic reticulum stress and results in attenuation of ERN1 activity. Interacts with TMBIM6; this interaction inhibits ERN1 activity. Interacts (via luminal domain) with MANF (via C-terminus); the interaction is decreased in the presence of increasing concentrations of Ca(2+). It depends on Mg(2+) as a cofactor. In terms of processing, autophosphorylated following homodimerization. Autophosphorylation promotes activation of the endoribonuclease domain. In response to ER stress, phosphorylated at Ser-724, Ser-729 and possibly Ser-726; phosphorylation promotes oligomerization and endoribonuclease activity. Dephosphorylated at Ser-724, Ser-729 and possibly Ser-726 by RPAP2 to abort failed ER-stress adaptation and trigger apoptosis. Phosphorylated at Ser-724; in response to the ER stressor tunicamycin. Post-translationally, ADP-ribosylated by PARP16 upon ER stress, which increases both kinase and endonuclease activities. As to expression, expressed in liver (at protein level). Ubiquitously expressed. High levels in thymus, liver and lung. In the brain, preferentially expressed in cortical, hippocampal and olfactory neurons.

It is found in the endoplasmic reticulum membrane. It carries out the reaction L-seryl-[protein] + ATP = O-phospho-L-seryl-[protein] + ADP + H(+). It catalyses the reaction L-threonyl-[protein] + ATP = O-phospho-L-threonyl-[protein] + ADP + H(+). With respect to regulation, the kinase domain is activated by trans-autophosphorylation following homodimerization. Kinase activity is required for activation of the endoribonuclease domain. Endoribonuclease activity is specifically inhibited by hydroxy-aryl-aldehydes (HAA) MKC9989, OICR464 and OICR573. Serine/threonine-protein kinase and endoribonuclease that acts as a key sensor for the endoplasmic reticulum unfolded protein response (UPR). In unstressed cells, the endoplasmic reticulum luminal domain is maintained in its inactive monomeric state by binding to the endoplasmic reticulum chaperone HSPA5/BiP. Accumulation of misfolded protein in the endoplasmic reticulum causes release of HSPA5/BiP, allowing the luminal domain to homodimerize, promoting autophosphorylation of the kinase domain and subsequent activation of the endoribonuclease activity. The endoribonuclease activity is specific for XBP1 mRNA and excises 26 nucleotides from XBP1 mRNA. The resulting spliced transcript of XBP1 encodes a transcriptional activator protein that up-regulates expression of UPR target genes. Acts as an upstream signal for ER stress-induced GORASP2-mediated unconventional (ER/Golgi-independent) trafficking of CFTR to cell membrane by modulating the expression and localization of SEC16A. This is Serine/threonine-protein kinase/endoribonuclease IRE1 from Mus musculus (Mouse).